We begin with the raw amino-acid sequence, 95 residues long: F(1)-ATPase inhibitor IF(1), mitochondrial (95 aa).

The N-terminal 25 residues, M1–L25, are a transit peptide targeting the mitochondrion. Disordered stretches follow at residues T20 to A48 and L76 to N95.

The protein belongs to the ATPase inhibitor family. Associates with the mitochondrial small ribosomal subunit (mt-SSU). IF(1) coiled-coil forms a helical bundle with the C-terminal extension of uS17m and also binds to mS27 in the mtSSU tail. Since the C-terminal extension of uS17m stabilizing the IF(1) on the mt-SSU is specific to N.crassa, IF(1) binding might also be specific.

It localises to the mitochondrion. Endogenous F(1)F(0)-ATPase inhibitor limiting ATP depletion when the mitochondrial membrane potential falls below a threshold and the F(1)F(0)-ATP synthase starts hydrolyzing ATP to pump protons out of the mitochondrial matrix. Required to avoid the consumption of cellular ATP when the F(1)F(0)-ATP synthase enzyme acts as an ATP hydrolase. Functions through inserting its N-terminal part into the catalytically active F1-ATPase, thereby blocking its rotational movement and subsequently the ATP hydrolase activity. The sequence is that of F(1)-ATPase inhibitor IF(1), mitochondrial (inh1) from Neurospora crassa (strain ATCC 24698 / 74-OR23-1A / CBS 708.71 / DSM 1257 / FGSC 987).